Consider the following 602-residue polypeptide: ATP-dependent lipid A-core flippase (602 aa).

Helical transmembrane passes span 28–48 (VGIFLLSIVGFVIFASTQPML), 84–104 (LLIILIAAWQGLGSFLGNYFL), 158–178 (IKVVIREGLTVVFLFAYLLWM), 180–200 (WHLTLVMVAILPVIAVMVSIA), and 268–288 (PMLQLVIYSAMAALMFLVLFL). An ABC transmembrane type-1 domain is found at 32 to 323 (LLSIVGFVIF…LSEVSSTIQK (292 aa)). The ABC transporter domain occupies 355 to 591 (LEVRNLSFTY…NGHYARLHAM (237 aa)). 389-396 (GRSGSGKS) contacts ATP.

The protein belongs to the ABC transporter superfamily. Lipid exporter (TC 3.A.1.106) family. Homodimer.

The protein localises to the cell inner membrane. The catalysed reaction is ATP + H2O + lipid A-core oligosaccharideSide 1 = ADP + phosphate + lipid A-core oligosaccharideSide 2.. Involved in lipopolysaccharide (LPS) biosynthesis. Translocates lipid A-core from the inner to the outer leaflet of the inner membrane. Transmembrane domains (TMD) form a pore in the inner membrane and the ATP-binding domain (NBD) is responsible for energy generation. The polypeptide is ATP-dependent lipid A-core flippase (Pseudomonas putida (strain ATCC 47054 / DSM 6125 / CFBP 8728 / NCIMB 11950 / KT2440)).